Here is an 833-residue protein sequence, read N- to C-terminus: G-type lectin S-receptor-like serine/threonine-protein kinase RKS1 (833 aa).

Residues 1-18 form the signal peptide; it reads MKVVFVIFFFFLFQFCIS. The region spanning 19 to 144 is the Bulb-type lectin domain; the sequence is VDTIMRRQSL…VTGRSFWESF (126 aa). Residues 19–440 are Extracellular-facing; that stretch reads VDTIMRRQSL…NGLSGKRRVL (422 aa). N-linked (GlcNAc...) asparagine glycosylation is found at Asn79, Asn92, Asn100, Asn109, Asn228, and Asn256. The EGF-like domain occupies 280-330; it reads PKEQCDNYAHCGPNGYCDSPSSKTFECTCLPGFEPKFPRHWFLRDSSGGCT. 3 disulfides stabilise this stretch: Cys284-Cys296, Cys290-Cys306, and Cys308-Cys329. Positions 338–421 constitute a PAN domain; the sequence is CSEKDGFVKL…SGQDFYIRVD (84 aa). N-linked (GlcNAc...) asparagine glycans are attached at residues Asn363 and Asn376. 2 disulfide bridges follow: Cys369–Cys396 and Cys373–Cys379. Residues 441–461 form a helical membrane-spanning segment; it reads LILISLIAAVMLLTVILFCVV. Residues 462 to 833 lie on the Cytoplasmic side of the membrane; that stretch reads RERRKSNRHR…DVTFSDIQGR (372 aa). One can recognise a Protein kinase domain in the interval 515–800; sequence FSSQNKLGAG…NLPNPKHPAF (286 aa). ATP contacts are provided by residues 521 to 529 and Lys543; that span reads LGAGGFGPV. 2 positions are modified to phosphoserine: Ser549 and Ser564. A caM-binding region spans residues 604-621; the sequence is EQRAELDWPKRMEIVRGI. Asp640 serves as the catalytic Proton acceptor. A phosphoserine mark is found at Ser644 and Ser657. Phosphothreonine is present on Thr674. Residues Ser717 and Ser821 each carry the phosphoserine modification.

Belongs to the protein kinase superfamily. Ser/Thr protein kinase family.

Its subcellular location is the cell membrane. It catalyses the reaction L-seryl-[protein] + ATP = O-phospho-L-seryl-[protein] + ADP + H(+). It carries out the reaction L-threonyl-[protein] + ATP = O-phospho-L-threonyl-[protein] + ADP + H(+). This Arabidopsis thaliana (Mouse-ear cress) protein is G-type lectin S-receptor-like serine/threonine-protein kinase RKS1 (RKS1).